The chain runs to 964 residues: Translation initiation factor IF-2 (964 aa).

A disordered region spans residues 49–357 (QIGSAEPADD…QEFDEMQAPL (309 aa)). Residues 62-85 (AKPAARKSQTSSKKTSKETTTAKP) show a composition bias toward low complexity. Over residues 86–102 (APGPKPGPGPKPTPGPR) the composition is skewed to pro residues. A compositionally biased stretch (low complexity) spans 103–117 (PGSSSGPKPGRSSAA). A compositionally biased stretch (pro residues) spans 159–169 (PHAPAPKPKPG). 2 stretches are compositionally biased toward low complexity: residues 190–212 (GLPS…APRP) and 242–251 (GQGERMPRPG). Gly residues-rich tracts occupy residues 252-261 (GSQGSRGGSG) and 284-334 (GRGG…GRGG). Basic residues predominate over residues 335–346 (GGRRGRKSRKQR). One can recognise a tr-type G domain in the interval 458–629 (ARPPVVTVMG…AIVLTADAAL (172 aa)). The G1 stretch occupies residues 467 to 474 (GHVDHGKT). Residue 467–474 (GHVDHGKT) participates in GTP binding. The interval 492–496 (GITQA) is G2. Residues 517-520 (DTPG) are G3. Residues 517 to 521 (DTPGH) and 571 to 574 (NKID) each bind GTP. The segment at 571-574 (NKID) is G4. Residues 607-609 (SAR) form a G5 region.

This sequence belongs to the TRAFAC class translation factor GTPase superfamily. Classic translation factor GTPase family. IF-2 subfamily.

It is found in the cytoplasm. One of the essential components for the initiation of protein synthesis. Protects formylmethionyl-tRNA from spontaneous hydrolysis and promotes its binding to the 30S ribosomal subunits. Also involved in the hydrolysis of GTP during the formation of the 70S ribosomal complex. This Cutibacterium acnes (strain DSM 16379 / KPA171202) (Propionibacterium acnes) protein is Translation initiation factor IF-2.